Here is a 377-residue protein sequence, read N- to C-terminus: MRASFFWFLPLLLILASVAQGQPRPKPGIRRKPKPRPTPSFPQPHEPAEPTDLPPPLPPGPPSVFPDCPRECYCPPDFPSALYCDSRNLRKVPIIPPRIHYLYLQNNFITELPVESFKNATGLRWINLDNNRIRKVDQRVLEKLPGLAFLYMDKNQLEEVPSALPRNLEQLRLSQNLISRIPPGVFSKLENLLLLDLQHNRLSDGVFKADTFQGLKNLMQLNLAHNILRRMPPKVPPAIHQLYLDSNKIETIPSGYFKDFPNLAFIRMNYNKLSDRGLPKNSFNISNLLVLHLSHNKISNVPAISNKLEHLYLNNNSIEKINGTQICPSNLVAFHDFSSDLENVPHLRYLRLDGNFLKPPIPLDLMMCFRLLQSVVI.

The N-terminal stretch at 1-21 (MRASFFWFLPLLLILASVAQG) is a signal peptide. Positions 22 to 61 (QPRPKPGIRRKPKPRPTPSFPQPHEPAEPTDLPPPLPPGP) are disordered. 2 stretches are compositionally biased toward pro residues: residues 36 to 45 (RPTPSFPQPH) and 52 to 61 (DLPPPLPPGP). LRR repeat units lie at residues 90-109 (RKVPIIPPRIHYLYLQNNFI), 110-133 (TELPVESFKNATGLRWINLDNNRI), 134-157 (RKVDQRVLEKLPGLAFLYMDKNQL), 158-178 (EEVPSALPRNLEQLRLSQNLI), 179-202 (SRIPPGVFSKLENLLLLDLQHNRL), 203-228 (SDGVFKADTFQGLKNLMQLNLAHNIL), 229-249 (RRMPPKVPPAIHQLYLDSNKI), 250-273 (ETIPSGYFKDFPNLAFIRMNYNKL), 274-298 (SDRGLPKNSFNISNLLVLHLSHNKI), 299-318 (SNVPAISNKLEHLYLNNNSI), 319-357 (EKINGTQICPSNLVAFHDFSSDLENVPHLRYLRLDGNFL), and 358-377 (KPPIPLDLMMCFRLLQSVVI). N-linked (GlcNAc...) asparagine glycosylation is present at N119. 3 N-linked (GlcNAc...) asparagine glycosylation sites follow: N284, N315, and N322. An intrachain disulfide couples C327 to C368.

The protein belongs to the small leucine-rich proteoglycan (SLRP) family. SLRP class II subfamily. As to quaternary structure, binds the basement membrane heparan sulfate proteoglycan perlecan and triple helical collagens type I and type II. Post-translationally, glycosylated; contains heparan sulfate.

It is found in the secreted. The protein resides in the extracellular space. It localises to the extracellular matrix. May anchor basement membranes to the underlying connective tissue. The polypeptide is Prolargin (Prelp) (Rattus norvegicus (Rat)).